A 274-amino-acid polypeptide reads, in one-letter code: Triosephosphate isomerase (274 aa).

13–15 is a substrate binding site; it reads NWK. The Electrophile role is filled by His-98. Glu-170 (proton acceptor) is an active-site residue. Residues Gly-176 and Ser-216 each coordinate substrate.

It belongs to the triosephosphate isomerase family. Homodimer.

It is found in the cytoplasm. The catalysed reaction is D-glyceraldehyde 3-phosphate = dihydroxyacetone phosphate. The protein operates within carbohydrate biosynthesis; gluconeogenesis. It functions in the pathway carbohydrate degradation; glycolysis; D-glyceraldehyde 3-phosphate from glycerone phosphate: step 1/1. In terms of biological role, involved in the gluconeogenesis. Catalyzes stereospecifically the conversion of dihydroxyacetone phosphate (DHAP) to D-glyceraldehyde-3-phosphate (G3P). The protein is Triosephosphate isomerase of Onion yellows phytoplasma (strain OY-M).